We begin with the raw amino-acid sequence, 204 residues long: Sperm acrosome developmental regulator (204 aa).

Ser65 bears the Phosphoserine mark. Residues 172–184 (RRQERRRRHHLRA) are compositionally biased toward basic residues. The disordered stretch occupies residues 172–204 (RRQERRRRHHLRAHMGPQPDPAQGLKQDARSPL).

The protein localises to the cytoplasmic vesicle. The protein resides in the secretory vesicle. It localises to the acrosome. Its function is as follows. May play an important role in acrosome formation and nucleus shaping during spermiogenesis. This chain is Sperm acrosome developmental regulator (SPACDR), found in Bos taurus (Bovine).